Reading from the N-terminus, the 373-residue chain is MSGNTFGKLFTVTSFGESHGLGLGAIIDGCPPGLELTEADLQIDLDRRRPGTSRYTTARREADEVKILSGVFEGKTTGTPIGLMIENTDQRSKDYGNIADSFRPGHADYTYWQKYGLRDYRGGGRSSARETAMRVAAGAIAKKYLAEKFGMTIQACVTQIGDIVASGPKGAPFDVNTVDWSSVEDNPFFFPDETKIEQLGEYLRDIIKEKDSIGAKVTVVATNVPVGLGEPIFDRLDADIAHGLMSINAVKGVEVGDGFAVVNQKGSEHRDELTPEGFSTNHSGGVLGGISSGQQIIAHLALKPTSSIGVSGKTVNLTGEATDIITKGRHDPCVGIRAVPIAEAMLALTLMDHFLRHRGQNADVQCNTPDIEA.

NADP(+) is bound by residues arginine 48 and arginine 54. Residues 125 to 127 (RSS), 248 to 249 (NA), glycine 288, 303 to 307 (KPTSS), and arginine 329 each bind FMN.

The protein belongs to the chorismate synthase family. In terms of assembly, homotetramer. FMNH2 serves as cofactor.

The catalysed reaction is 5-O-(1-carboxyvinyl)-3-phosphoshikimate = chorismate + phosphate. The protein operates within metabolic intermediate biosynthesis; chorismate biosynthesis; chorismate from D-erythrose 4-phosphate and phosphoenolpyruvate: step 7/7. Its function is as follows. Catalyzes the anti-1,4-elimination of the C-3 phosphate and the C-6 proR hydrogen from 5-enolpyruvylshikimate-3-phosphate (EPSP) to yield chorismate, which is the branch point compound that serves as the starting substrate for the three terminal pathways of aromatic amino acid biosynthesis. This reaction introduces a second double bond into the aromatic ring system. The sequence is that of Chorismate synthase from Colwellia psychrerythraea (strain 34H / ATCC BAA-681) (Vibrio psychroerythus).